We begin with the raw amino-acid sequence, 283 residues long: Acetyl-coenzyme A carboxylase carboxyl transferase subunit beta (283 aa).

The region spanning 23–283 is the CoA carboxyltransferase N-terminal domain; the sequence is LWIKCPSCSE…DFLMAGKAAA (261 aa). 4 residues coordinate Zn(2+): C27, C30, C46, and C49. The C4-type zinc-finger motif lies at 27 to 49; that stretch reads CPSCSEMLFTKEYEDNLSVCPHC.

This sequence belongs to the AccD/PCCB family. In terms of assembly, acetyl-CoA carboxylase is a heterohexamer composed of biotin carboxyl carrier protein (AccB), biotin carboxylase (AccC) and two subunits each of ACCase subunit alpha (AccA) and ACCase subunit beta (AccD). Zn(2+) serves as cofactor.

It is found in the cytoplasm. It carries out the reaction N(6)-carboxybiotinyl-L-lysyl-[protein] + acetyl-CoA = N(6)-biotinyl-L-lysyl-[protein] + malonyl-CoA. It participates in lipid metabolism; malonyl-CoA biosynthesis; malonyl-CoA from acetyl-CoA: step 1/1. Functionally, component of the acetyl coenzyme A carboxylase (ACC) complex. Biotin carboxylase (BC) catalyzes the carboxylation of biotin on its carrier protein (BCCP) and then the CO(2) group is transferred by the transcarboxylase to acetyl-CoA to form malonyl-CoA. In Novosphingobium aromaticivorans (strain ATCC 700278 / DSM 12444 / CCUG 56034 / CIP 105152 / NBRC 16084 / F199), this protein is Acetyl-coenzyme A carboxylase carboxyl transferase subunit beta.